The sequence spans 102 residues: MSRPTETERCIESLIAVFQKYAGKDGHSVTLSKTEFLSFMNTELAAFTKNQKDPGVLDRMMKKLDLNSDGQLDFQEFLNLIGGLAVACHESFVKAAPPQKRF.

A Phosphoserine modification is found at Ser-2. Thr-7 carries the phosphothreonine modification. EF-hand domains lie at 12 to 47 (ESLI…LAAF) and 52 to 87 (KDPG…LAVA). Lys-24 is modified (N6-acetyllysine). Residues Ser-28, Thr-30, Glu-35, Asp-65, Asn-67, Asp-69, Gln-71, and Glu-76 each contribute to the Ca(2+) site.

It belongs to the S-100 family. In terms of assembly, homodimer; disulfide-linked. Post-translationally, phosphorylation at Thr-7 significantly suppresses homodimerization and promotes association with NCL/nucleolin which induces nuclear translocation. As to expression, smooth muscle and non-muscle tissues.

It is found in the cytoplasm. It localises to the nucleus. Its function is as follows. Facilitates the differentiation and the cornification of keratinocytes. The sequence is that of Protein S100-A11 (S100A11) from Oryctolagus cuniculus (Rabbit).